Consider the following 94-residue polypeptide: PTS system galactitol-specific EIIB component (94 aa).

Residues 1–94 enclose the PTS EIIB type-2 domain; that stretch reads MKRKIIVACG…QNKILTILQG (94 aa). Cysteine 9 functions as the Phosphocysteine intermediate; for EIIB activity in the catalytic mechanism. Cysteine 9 carries the phosphocysteine; by EIIA modification.

As to quaternary structure, forms a complex with one each of subunit of GatA, GatB and 2 subunits of GatC.

It is found in the cytoplasm. The catalysed reaction is galactitol(out) + N(pros)-phospho-L-histidyl-[protein] = galactitol 1-phosphate(in) + L-histidyl-[protein]. Its function is as follows. The phosphoenolpyruvate-dependent sugar phosphotransferase system (PTS), a major carbohydrate active transport system, catalyzes the phosphorylation of incoming sugar substrates concomitant with their translocation across the cell membrane. The enzyme II complex composed of GatA, GatB and GatC is involved in galactitol transport. It can also use D-glucitol. This chain is PTS system galactitol-specific EIIB component, found in Escherichia coli (strain K12).